We begin with the raw amino-acid sequence, 185 residues long: Ribosome-recycling factor (185 aa).

It belongs to the RRF family.

The protein localises to the cytoplasm. Functionally, responsible for the release of ribosomes from messenger RNA at the termination of protein biosynthesis. May increase the efficiency of translation by recycling ribosomes from one round of translation to another. This is Ribosome-recycling factor from Baumannia cicadellinicola subsp. Homalodisca coagulata.